A 2403-amino-acid chain; its full sequence is Highly reducing polyketide synthase fogA (2403 aa).

Residues 3–428 form the Ketosynthase family 3 (KS3) domain; the sequence is DDPPCIVGMA…GANAHVILES (426 aa). Residues Cys176, His311, and His350 each act as for beta-ketoacyl synthase activity in the active site. The malonyl-CoA:ACP transacylase (MAT) domain stretch occupies residues 538 to 858; the sequence is VFTGQGAQYA…PYAPSLVRKE (321 aa). Ser632 serves as the catalytic For malonyltransferase activity. The tract at residues 929–1068 is N-terminal hotdog fold; that stretch reads HELLGTFALT…GSIRVVEPLT (140 aa). Residues 929-1238 are dehydratase (DH) domain; that stretch reads HELLGTFALT…DARMSLYTGK (310 aa). The region spanning 929–1241 is the PKS/mFAS DH domain; the sequence is HELLGTFALT…MSLYTGKSSA (313 aa). His961 serves as the catalytic Proton acceptor; for dehydratase activity. Positions 1084 to 1241 are C-terminal hotdog fold; it reads SFEASPTNRW…MSLYTGKSSA (158 aa). The active-site Proton donor; for dehydratase activity is Asp1152. The tract at residues 1663–1981 is enoyl reductase (ER) domain; it reads GATDSMFFQQ…QQDRIGKIVI (319 aa). A ketoreductase (KR) domain region spans residues 2006–2185; the sequence is VYLLIGCLGG…AVAVGLGMIS (180 aa). The tract at residues 2280–2300 is disordered; sequence AQNSTSSSGSNSNTPTTAAPW. Residues 2282-2296 are compositionally biased toward low complexity; that stretch reads NSTSSSGSNSNTPTT. Residues 2320-2398 form the Carrier domain; sequence SLNAAILRLI…GLAVVVEGKL (79 aa). Ser2357 is subject to O-(pantetheine 4'-phosphoryl)serine.

The cofactor is pantetheine 4'-phosphate.

It participates in secondary metabolite biosynthesis. Functionally, highly reducing polyketide synthase; part of the gene cluster that mediates the biosynthesis of flavoglaucin and congeners (including aspergin, dihydroauroglaucin and auroglaucin), prenylated salicylaldehyde derivatives carrying a saturated or an unsaturated C-7 side chain. FogA releases the carboxylic acid (8E,10E,12E)-3,5,7-trihydroxytetradeca-8,10,12-trienoic acid as its product, as well as derivatives with one and two double bonds. FogA is indeed able to reduce the initial triketide, thus being at least partially responsible for the differently saturated heptyl side chains of flavoglaucin congeners. The oxidoreductases fogB, fogC and fogD modify the nascent polyketide in fogA-bound form and, together, fogA, fogB, fogC and fogD are necessary for the formation of the aromatic core and the cyclized PKS products are released as salicyl alcohols. In particular, fogB is responsible for oxidation of a hydroxyl group or reduction of remaining double bond(s) at the C-7 residue whereas fogD is probably involved in the reductive release of the modified PKS products. The cytochrome P450 monooxygenase fogE is then responsible for the hydroxylation at C-3 of the benzene ring. The fogE products are substrates of the prenyltransferase fogH and the prenylated benzyl alcohols are subsequently oxidized by the fogF to produce the final aryl aldehydes flavoglaucin and congeners. The short-chain dehydrogenase fogG does not seem to be involved in the biosynthesis of the prenylated salicylaldehyde derivatives. The chain is Highly reducing polyketide synthase fogA from Aspergillus ruber (strain CBS 135680).